The sequence spans 209 residues: Ion-translocating oxidoreductase complex subunit G (209 aa).

Residues 9-29 (GLILAVFACVSTGLVALTYAL) form a helical membrane-spanning segment. T175 is modified (FMN phosphoryl threonine).

This sequence belongs to the RnfG family. The complex is composed of six subunits: RnfA, RnfB, RnfC, RnfD, RnfE and RnfG. It depends on FMN as a cofactor.

The protein resides in the cell inner membrane. Functionally, part of a membrane-bound complex that couples electron transfer with translocation of ions across the membrane. The protein is Ion-translocating oxidoreductase complex subunit G of Vibrio cholerae serotype O1 (strain ATCC 39315 / El Tor Inaba N16961).